We begin with the raw amino-acid sequence, 632 residues long: Thioredoxin domain-containing protein C959.05c (632 aa).

The N-terminal stretch at 1 to 22 (MKLFLYHFTFIVYYFIISFSYA) is a signal peptide. N-linked (GlcNAc...) asparagine glycans are attached at residues asparagine 35, asparagine 41, and asparagine 140. In terms of domain architecture, Thioredoxin spans 153 to 284 (SDSSSTDPAF…LLSYSNQVAS (132 aa)). Cysteine 209 and cysteine 212 are oxidised to a cystine. A glycan (N-linked (GlcNAc...) asparagine) is linked at asparagine 557. A helical transmembrane segment spans residues 583 to 603 (LIVFNLLIALLILSILTIISA).

Belongs to the protein disulfide isomerase family.

The protein resides in the endoplasmic reticulum membrane. The catalysed reaction is Catalyzes the rearrangement of -S-S- bonds in proteins.. In terms of biological role, acts as a membrane-bound chaperone in endoplasmic reticulum quality control. Probably facilitates presentation of substrate to membrane-bound components of the degradation machinery. The sequence is that of Thioredoxin domain-containing protein C959.05c from Schizosaccharomyces pombe (strain 972 / ATCC 24843) (Fission yeast).